A 96-amino-acid chain; its full sequence is uncharacterized protein (96 aa).

Residues 35-96 (SPSGEKRSTK…KKFSSPPHPK (62 aa)) are disordered. A compositionally biased stretch (basic and acidic residues) spans 38–52 (GEKRSTKNQTKENTK). Polar residues predominate over residues 69–80 (ANQQTNENSKPL).

This is an uncharacterized protein from Dictyostelium discoideum (Social amoeba).